A 453-amino-acid chain; its full sequence is UDP-N-acetylmuramoylalanine--D-glutamate ligase (453 aa).

G115–T121 is an ATP binding site.

This sequence belongs to the MurCDEF family.

The protein localises to the cytoplasm. It catalyses the reaction UDP-N-acetyl-alpha-D-muramoyl-L-alanine + D-glutamate + ATP = UDP-N-acetyl-alpha-D-muramoyl-L-alanyl-D-glutamate + ADP + phosphate + H(+). It functions in the pathway cell wall biogenesis; peptidoglycan biosynthesis. Cell wall formation. Catalyzes the addition of glutamate to the nucleotide precursor UDP-N-acetylmuramoyl-L-alanine (UMA). This is UDP-N-acetylmuramoylalanine--D-glutamate ligase from Geotalea uraniireducens (strain Rf4) (Geobacter uraniireducens).